A 589-amino-acid polypeptide reads, in one-letter code: Aspartate--tRNA ligase (589 aa).

Residue Glu174 participates in L-aspartate binding. The aspartate stretch occupies residues Gln198–Lys201. Arg220 serves as a coordination point for L-aspartate. ATP is bound by residues Arg220–Glu222 and Gln229. Residue His448 coordinates L-aspartate. Glu483 is an ATP binding site. An L-aspartate-binding site is contributed by Arg490. Gly535 to Arg538 is an ATP binding site.

This sequence belongs to the class-II aminoacyl-tRNA synthetase family. Type 1 subfamily. Homodimer.

It localises to the cytoplasm. It catalyses the reaction tRNA(Asp) + L-aspartate + ATP = L-aspartyl-tRNA(Asp) + AMP + diphosphate. Catalyzes the attachment of L-aspartate to tRNA(Asp) in a two-step reaction: L-aspartate is first activated by ATP to form Asp-AMP and then transferred to the acceptor end of tRNA(Asp). The sequence is that of Aspartate--tRNA ligase from Xylella fastidiosa (strain 9a5c).